We begin with the raw amino-acid sequence, 511 residues long: MASEGDWTCDANDAVQITLVQPGEQKPKTLSSFHPQFTYPIFGDDETIFGYKGLIIRLRFAAHDLRPHIHISYDEKFKTVGDTSAVDLIKTLSPFIPEEAFSTLPDYENAVQEDKDAKDFVPPGKLVHNYVTRGRTYEIWAASLADPQVRRLLDRAQVFVSLFIEAGTPLETEDPEWTLERWTVYFVYEKVKPPTPTASQYSIVGYATTYRWWFYQRDSPEKGTVTNDPFPGPEIRPAQLPARLRIAQFLILPPHQGSGHGTHLYTTIHTACFNDSTIVELTVEDPNEAFDALRDTADFHILRPEFLKHNVNINPDPYAELSKKQRPRRVPTSALIPTKLLHDIRSTYKIASTQFAHVLEMFLLGEIPTKNRHAGGANMSRLLVKKYNATDPNERRYYWWRMLVKQRLFKRSRDILIQLEMSDRIEKLEETVTNVEEGYEALIKVFTAREEALMAKQEESGESPETAVLEDSVASSSDSSTRDQRTKRKFTVEDEDEEEEGESEVSKRPKV.

Interaction with histone H4 N-terminus regions lie at residues 44 to 46 (DDE) and 210 to 212 (YRW). Residues 249-251 (FLI) and 256-262 (QGSGHGT) contribute to the acetyl-CoA site. The Proton donor/acceptor role is filled by E284. Residues 455–511 (AKQEESGESPETAVLEDSVASSSDSSTRDQRTKRKFTVEDEDEEEEGESEVSKRPKV) form a disordered region. Acidic residues predominate over residues 493 to 503 (EDEDEEEEGES).

It belongs to the HAT1 family. Component of the HAT-B complex composed of at least hat1 and hat2. The HAT-B complex binds to histone H4 tail.

The protein localises to the cytoplasm. The protein resides in the nucleus. The catalysed reaction is L-lysyl-[protein] + acetyl-CoA = N(6)-acetyl-L-lysyl-[protein] + CoA + H(+). Functionally, catalytic component of the histone acetylase B (HAT-B) complex. Acetylates 'Lys-12' of histone H4 which is required for telomeric silencing. Has intrinsic substrate specificity that modifies lysine in recognition sequence GXGKXG. Involved in DNA double-strand break repair. The polypeptide is Histone acetyltransferase type B catalytic subunit (hat1) (Aspergillus oryzae (strain ATCC 42149 / RIB 40) (Yellow koji mold)).